The primary structure comprises 448 residues: Potassium/proton antiporter CemA (448 aa).

4 helical membrane-spanning segments follow: residues 47 to 67 (IVFY…LSLL), 213 to 233 (LSSL…STLF), 314 to 334 (IISH…LFVA), and 395 to 415 (IISC…KYLI).

The protein belongs to the CemA family.

The protein localises to the plastid membrane. The enzyme catalyses K(+)(in) + H(+)(out) = K(+)(out) + H(+)(in). In terms of biological role, may be involved in proton extrusion. The polypeptide is Potassium/proton antiporter CemA (Aneura mirabilis (Parasitic liverwort)).